A 447-amino-acid polypeptide reads, in one-letter code: MPINITMPALSPTMEEGNLAKWLVKEGDKVKSGDVIAEIETDKATMEVEAVDEGTVAKIVVPAGTEGVKVNALIAVLAAEGEDVATAAKGGNGAAGAVPAPKPKETAETAPAAAPAPAAAPAPQAAAPASPAPADGEGKRIFSSPLARRLAKEAGIDLSAIAGSGPHGRVVKKDVETAVSGGAAKPAGAPAAAPAPATLAKGMSEDAVLKLFEPGSYELVPHDGMRKTIAKRLVESKQTIPHFYVSVDCELDALMALRAQLNAAAPEKDGKPVYKLSVNDMVIKALALALRDVPDANVSWTDQNMVKHKHADVGVAVSIPGGLITPIVRQAELKSLSAISNEMKDLGKRAKERKLKPEEYQGGTTAVSNMGMMGVKDFAAVVNPPHATILAVGAGEDRVVVRNKEMVIANVMTVTLSTDHRCVDGALGAELLAAFKRYIENPMGMLV.

Residues 2 to 78 (PINITMPALS…KVNALIAVLA (77 aa)) form the Lipoyl-binding domain. An N6-lipoyllysine modification is found at lysine 43. Positions 91–140 (GNGAAGAVPAPKPKETAETAPAAAPAPAAAPAPQAAAPASPAPADGEGKR) are disordered. Residues 108–134 (ETAPAAAPAPAAAPAPQAAAPASPAPA) are compositionally biased toward low complexity. The Peripheral subunit-binding (PSBD) domain occupies 142-179 (FSSPLARRLAKEAGIDLSAIAGSGPHGRVVKKDVETAV). Histidine 420 is an active-site residue.

It belongs to the 2-oxoacid dehydrogenase family. In terms of assembly, forms a 24-polypeptide structural core with octahedral symmetry. It depends on (R)-lipoate as a cofactor.

The enzyme catalyses N(6)-[(R)-dihydrolipoyl]-L-lysyl-[protein] + acetyl-CoA = N(6)-[(R)-S(8)-acetyldihydrolipoyl]-L-lysyl-[protein] + CoA. The pyruvate dehydrogenase complex catalyzes the overall conversion of pyruvate to acetyl-CoA and CO(2). It contains multiple copies of three enzymatic components: pyruvate dehydrogenase (E1), dihydrolipoamide acetyltransferase (E2) and lipoamide dehydrogenase (E3). The chain is Dihydrolipoyllysine-residue acetyltransferase component of pyruvate dehydrogenase complex (pdhC) from Rhizobium meliloti (strain 1021) (Ensifer meliloti).